The primary structure comprises 561 residues: Potassium-transporting ATPase potassium-binding subunit (561 aa).

12 helical membrane passes run glycine 2–leucine 22, isoleucine 66–phenylalanine 86, alanine 135–isoleucine 155, isoleucine 177–threonine 197, leucine 253–phenylalanine 273, alanine 280–glycine 300, phenylalanine 327–valine 347, leucine 354–glycine 374, glycine 378–glycine 398, isoleucine 413–isoleucine 433, leucine 482–leucine 502, and alanine 531–isoleucine 551.

It belongs to the KdpA family. As to quaternary structure, the system is composed of three essential subunits: KdpA, KdpB and KdpC.

It is found in the cell inner membrane. In terms of biological role, part of the high-affinity ATP-driven potassium transport (or Kdp) system, which catalyzes the hydrolysis of ATP coupled with the electrogenic transport of potassium into the cytoplasm. This subunit binds the periplasmic potassium ions and delivers the ions to the membrane domain of KdpB through an intramembrane tunnel. The sequence is that of Potassium-transporting ATPase potassium-binding subunit from Nostoc sp. (strain PCC 7120 / SAG 25.82 / UTEX 2576).